We begin with the raw amino-acid sequence, 155 residues long: Nascent polypeptide-associated complex subunit beta (155 aa).

2 disordered regions span residues 1–39 (MDQA…DDKK) and 122–155 (QNMQ…SKVE). A compositionally biased stretch (basic residues) spans 21-31 (TPRRKTKKVHK). One can recognise an NAC-A/B domain in the interval 34–99 (GTDDKKLQTS…GEEKELTELV (66 aa)). Basic and acidic residues predominate over residues 125 to 135 (QKKEGEAKKEG).

This sequence belongs to the NAC-beta family. As to quaternary structure, part of the nascent polypeptide-associated complex (NAC), consisting of EGD2 and EGD1. NAC associates with ribosomes via EGD1.

Its subcellular location is the cytoplasm. It localises to the nucleus. In terms of biological role, component of the nascent polypeptide-associated complex (NAC), a dynamic component of the ribosomal exit tunnel, protecting the emerging polypeptides from interaction with other cytoplasmic proteins to ensure appropriate nascent protein targeting. The NAC complex also promotes mitochondrial protein import by enhancing productive ribosome interactions with the outer mitochondrial membrane and blocks the inappropriate interaction of ribosomes translating non-secretory nascent polypeptides with translocation sites in the membrane of the endoplasmic reticulum. EGD1 may act as a transcription factor that exert a negative effect on the expression of several genes that are transcribed by RNA polymerase II. This Coccidioides immitis (strain RS) (Valley fever fungus) protein is Nascent polypeptide-associated complex subunit beta (EGD1).